The following is a 352-amino-acid chain: UDP-3-O-acylglucosamine N-acyltransferase (352 aa).

The active-site Proton acceptor is the His-257.

The protein belongs to the transferase hexapeptide repeat family. LpxD subfamily. In terms of assembly, homotrimer.

It catalyses the reaction a UDP-3-O-[(3R)-3-hydroxyacyl]-alpha-D-glucosamine + a (3R)-hydroxyacyl-[ACP] = a UDP-2-N,3-O-bis[(3R)-3-hydroxyacyl]-alpha-D-glucosamine + holo-[ACP] + H(+). It participates in bacterial outer membrane biogenesis; LPS lipid A biosynthesis. Functionally, catalyzes the N-acylation of UDP-3-O-acylglucosamine using 3-hydroxyacyl-ACP as the acyl donor. Is involved in the biosynthesis of lipid A, a phosphorylated glycolipid that anchors the lipopolysaccharide to the outer membrane of the cell. In Methylobacterium sp. (strain 4-46), this protein is UDP-3-O-acylglucosamine N-acyltransferase.